We begin with the raw amino-acid sequence, 224 residues long: Twisted gastrulation protein homolog 1 (224 aa).

The signal sequence occupies residues 1–26; it reads MRSPCAALSASLLLLLLLLWARSSVG. Residues Asn53, Asn82, and Asn148 are each glycosylated (N-linked (GlcNAc...) asparagine).

Belongs to the twisted gastrulation protein family. In terms of assembly, interacts with CHRD and BMP4. This interaction enhances CHRD/BMP4 complex formation. Interacts with BMP7.

It is found in the secreted. Functionally, may be involved in dorsoventral axis formation. Seems to antagonize BMP signaling by forming ternary complexes with CHRD and BMPs, thereby preventing BMPs from binding to their receptors. In addition to the anti-BMP function, also has pro-BMP activity, partly mediated by cleavage and degradation of CHRD, which releases BMPs from ternary complexes. May be an important modulator of BMP-regulated cartilage development and chondrocyte differentiation. May play a role in thymocyte development. This chain is Twisted gastrulation protein homolog 1 (TWSG1), found in Gallus gallus (Chicken).